We begin with the raw amino-acid sequence, 236 residues long: 2,3,4,5-tetrahydropyridine-2,6-dicarboxylate N-acetyltransferase (236 aa).

Belongs to the transferase hexapeptide repeat family. DapH subfamily.

The catalysed reaction is (S)-2,3,4,5-tetrahydrodipicolinate + acetyl-CoA + H2O = L-2-acetamido-6-oxoheptanedioate + CoA. It participates in amino-acid biosynthesis; L-lysine biosynthesis via DAP pathway; LL-2,6-diaminopimelate from (S)-tetrahydrodipicolinate (acetylase route): step 1/3. Functionally, catalyzes the transfer of an acetyl group from acetyl-CoA to tetrahydrodipicolinate. The chain is 2,3,4,5-tetrahydropyridine-2,6-dicarboxylate N-acetyltransferase from Lactobacillus acidophilus (strain ATCC 700396 / NCK56 / N2 / NCFM).